Reading from the N-terminus, the 135-residue chain is Aspartate 1-decarboxylase (135 aa).

Catalysis depends on Ser-25, which acts as the Schiff-base intermediate with substrate; via pyruvic acid. Residue Ser-25 is modified to Pyruvic acid (Ser). Thr-57 provides a ligand contact to substrate. Residue Tyr-58 is the Proton donor of the active site. Residue 73 to 75 (GAA) participates in substrate binding.

This sequence belongs to the PanD family. As to quaternary structure, heterooctamer of four alpha and four beta subunits. Requires pyruvate as cofactor. In terms of processing, is synthesized initially as an inactive proenzyme, which is activated by self-cleavage at a specific serine bond to produce a beta-subunit with a hydroxyl group at its C-terminus and an alpha-subunit with a pyruvoyl group at its N-terminus.

Its subcellular location is the cytoplasm. The catalysed reaction is L-aspartate + H(+) = beta-alanine + CO2. Its pathway is cofactor biosynthesis; (R)-pantothenate biosynthesis; beta-alanine from L-aspartate: step 1/1. Its function is as follows. Catalyzes the pyruvoyl-dependent decarboxylation of aspartate to produce beta-alanine. The chain is Aspartate 1-decarboxylase from Mycolicibacterium vanbaalenii (strain DSM 7251 / JCM 13017 / BCRC 16820 / KCTC 9966 / NRRL B-24157 / PYR-1) (Mycobacterium vanbaalenii).